The sequence spans 363 residues: Wortmanamides biosynthesis cluster protein C (363 aa).

7 helical membrane passes run 15 to 35 (FVTL…RFVA), 48 to 68 (WLAV…LMAI), 95 to 115 (IAGL…ILAF), 129 to 149 (ICIY…CIFQ), 175 to 195 (ILGG…LAMI), 210 to 230 (VTVL…KIAV), and 237 to 257 (LYAF…ALLC). Residues 293–312 (SSSKNSRKHGPYDSDQSPGP) form a disordered region. N-linked (GlcNAc...) asparagine glycosylation occurs at asparagine 321. The segment at 344–363 (SPITHPQAYSKQTTRQFDVV) is disordered.

This sequence belongs to the SAT4 family.

Its subcellular location is the membrane. It participates in secondary metabolite biosynthesis. In terms of biological role, part of the gene cluster that mediates the biosynthesis of wortmanamides A and B, reduced long-chain polyketides amidated with a specific omega-amino acid, 5-aminopentanoic acid (5PA). The PKS modules of TwmB are involved in the synthesis of the polyketide backbone, whereas the non-canonical C domain of TwmB is a bonafide condensation domain that specifically selects 5PA and catalyzes amidation to release polyketide chain. The C domain clearly prefers C16 and C18 fatty acyl substrates, which is consistent with simultaneous formation of both octaketide and nonaketide acyl amides wortmanamides A and B. Because TwmB lacks a designated enoylreductase (ER) domain, the required activity is provided the enoyl reductase TwmE. The roles of the remaining enzymes have still to be clarified. The chain is Wortmanamides biosynthesis cluster protein C from Talaromyces wortmannii (Penicillium wortmannii).